A 520-amino-acid chain; its full sequence is MAATEAVHHIHLQNFSRSLLETLNGQRLGGHFCDVTVRIREASLRAHRCVLAAGSPFFQDKLLLGHSEIRVPPVVPAQTVRQLVEFLYSGSLVVAQGEALQVLTAASVLRIQTVIDECTQIIARARVPNTPAPAPLPPPVPPPLAPAQLRHRLRHLLAARPPGHPNAAHSRKQRQPARLQLPAPPAPIKAEGPDAEPALTAAPEDRGEEDDDEETDEETDAEEGEGGGGGPGEGQAPPAFPDCAGGFLTTAADSAREDPPASTGITDYGGAGRDFLRGTGVTEDVFPDSYVSAWHEESSGGPESCPVETSAPPDCALAGPRPTGVKTPGPPVALFPFHLGAPGPPAPTPPTPSGPAPAPPPTFYPTLQPDAAPSAQLGETQAVPAAPAAQATAISGTPVRAPGGQGAEQPAYECSHCRKTFSSRKNYTKHMFIHSGEKPHQCAVCWRSFSLRDYLLKHMVTHTGVRAFQCAVCAKRFTQKSSLNVHMRTHRPERAPCPACGKVFSHRALLERHLAAHPAP.

The BTB domain occupies 33 to 96 (CDVTVRIREA…LYSGSLVVAQ (64 aa)). 2 disordered regions span residues 182-272 (PAPP…GGAG) and 337-372 (FHLG…PDAA). Acidic residues predominate over residues 206–225 (RGEEDDDEETDEETDAEEGE). Residues 342–363 (PGPPAPTPPTPSGPAPAPPPTF) are compositionally biased toward pro residues. 4 C2H2-type zinc fingers span residues 412–434 (YECS…MFIH), 440–462 (HQCA…MVTH), 468–490 (FQCA…MRTH), and 495–517 (APCP…LAAH).

It belongs to the krueppel C2H2-type zinc-finger protein family.

The protein localises to the nucleus. Its function is as follows. May be involved in transcriptional regulation. In the central nervous system, may play a role in glial cell differentiation. The chain is Zinc finger and BTB domain-containing protein 45 from Mus musculus (Mouse).